The sequence spans 141 residues: Putative pre-16S rRNA nuclease (141 aa).

It belongs to the YqgF nuclease family.

The protein localises to the cytoplasm. Its function is as follows. Could be a nuclease involved in processing of the 5'-end of pre-16S rRNA. The chain is Putative pre-16S rRNA nuclease from Shewanella oneidensis (strain ATCC 700550 / JCM 31522 / CIP 106686 / LMG 19005 / NCIMB 14063 / MR-1).